We begin with the raw amino-acid sequence, 155 residues long: 3-hydroxyacyl-[acyl-carrier-protein] dehydratase FabZ (155 aa).

Residue His-61 is part of the active site.

This sequence belongs to the thioester dehydratase family. FabZ subfamily.

The protein localises to the cytoplasm. The enzyme catalyses a (3R)-hydroxyacyl-[ACP] = a (2E)-enoyl-[ACP] + H2O. Involved in unsaturated fatty acids biosynthesis. Catalyzes the dehydration of short chain beta-hydroxyacyl-ACPs and long chain saturated and unsaturated beta-hydroxyacyl-ACPs. The polypeptide is 3-hydroxyacyl-[acyl-carrier-protein] dehydratase FabZ (Synechococcus elongatus (strain ATCC 33912 / PCC 7942 / FACHB-805) (Anacystis nidulans R2)).